Reading from the N-terminus, the 465-residue chain is Hydroxyacid-oxoacid transhydrogenase, mitochondrial (465 aa).

This sequence belongs to the iron-containing alcohol dehydrogenase family. Hydroxyacid-oxoacid transhydrogenase subfamily.

Its subcellular location is the mitochondrion. The catalysed reaction is (S)-3-hydroxybutanoate + 2-oxoglutarate = (R)-2-hydroxyglutarate + acetoacetate. The enzyme catalyses 4-hydroxybutanoate + 2-oxoglutarate = (R)-2-hydroxyglutarate + succinate semialdehyde. In terms of biological role, catalyzes the cofactor-independent reversible oxidation of gamma-hydroxybutyrate (GHB) to succinic semialdehyde (SSA) coupled to reduction of 2-ketoglutarate (2-KG) to D-2-hydroxyglutarate (D-2-HG). L-3-hydroxybutyrate (L-3-OHB) is also a substrate for HOT when using 2-KG as hydrogen acceptor, resulting in the formation of D-2-HG. The protein is Hydroxyacid-oxoacid transhydrogenase, mitochondrial of Caenorhabditis elegans.